A 165-amino-acid chain; its full sequence is UPF0254 protein MmarC6_1720 (165 aa).

Belongs to the UPF0254 family.

This is UPF0254 protein MmarC6_1720 from Methanococcus maripaludis (strain C6 / ATCC BAA-1332).